The primary structure comprises 65 residues: Large ribosomal subunit protein bL35 (65 aa).

The protein belongs to the bacterial ribosomal protein bL35 family.

This is Large ribosomal subunit protein bL35 from Phytoplasma australiense.